Reading from the N-terminus, the 79-residue chain is Conotoxin VnMKLT1-01121 (79 aa).

An N-terminal signal peptide occupies residues 1-22 (MKLTCMMIVAVLFLTAWTFVTA). The propeptide occupies 23-48 (DDSRNGLEYLFPKAHYEMNPEASKLN). Intrachain disulfides connect cysteine 53–cysteine 70, cysteine 60–cysteine 74, and cysteine 69–cysteine 78.

This sequence belongs to the conotoxin O1 superfamily. Expressed by the venom duct.

The protein localises to the secreted. This Conus ventricosus (Mediterranean cone) protein is Conotoxin VnMKLT1-01121.